A 182-amino-acid chain; its full sequence is R-phycoerythrin subunit beta (182 aa).

Residue Cys-82 coordinates (2R,3E)-phycoerythrobilin.

This sequence belongs to the phycobiliprotein family. Homodimer. Contains one covalently linked phycoerythrobilin chromophore.

Its function is as follows. Green-light absorbing phycoerythrin of unknown function. The polypeptide is R-phycoerythrin subunit beta (cpeB) (Prochlorococcus marinus (strain SARG / CCMP1375 / SS120)).